Here is a 142-residue protein sequence, read N- to C-terminus: Large ribosomal subunit protein uL13 (142 aa).

Belongs to the universal ribosomal protein uL13 family. In terms of assembly, part of the 50S ribosomal subunit.

This protein is one of the early assembly proteins of the 50S ribosomal subunit, although it is not seen to bind rRNA by itself. It is important during the early stages of 50S assembly. This chain is Large ribosomal subunit protein uL13, found in Treponema pallidum (strain Nichols).